Here is a 196-residue protein sequence, read N- to C-terminus: ATP-dependent Clp protease proteolytic subunit 1 (196 aa).

Ser96 serves as the catalytic Nucleophile. His121 is a catalytic residue.

The protein belongs to the peptidase S14 family. As to quaternary structure, fourteen ClpP subunits assemble into 2 heptameric rings which stack back to back to give a disk-like structure with a central cavity, resembling the structure of eukaryotic proteasomes.

It is found in the cytoplasm. The catalysed reaction is Hydrolysis of proteins to small peptides in the presence of ATP and magnesium. alpha-casein is the usual test substrate. In the absence of ATP, only oligopeptides shorter than five residues are hydrolyzed (such as succinyl-Leu-Tyr-|-NHMec, and Leu-Tyr-Leu-|-Tyr-Trp, in which cleavage of the -Tyr-|-Leu- and -Tyr-|-Trp bonds also occurs).. In terms of biological role, cleaves peptides in various proteins in a process that requires ATP hydrolysis. Has a chymotrypsin-like activity. Plays a major role in the degradation of misfolded proteins. The protein is ATP-dependent Clp protease proteolytic subunit 1 of Prochlorococcus marinus subsp. pastoris (strain CCMP1986 / NIES-2087 / MED4).